A 338-amino-acid polypeptide reads, in one-letter code: Ketol-acid reductoisomerase (NADP(+)) (338 aa).

One can recognise a KARI N-terminal Rossmann domain in the interval 1–181 (MKVYYDKDAD…GGTKGGVIET (181 aa)). Residues 24–27 (YGSQ), R47, and S52 contribute to the NADP(+) site. H107 is an active-site residue. An NADP(+)-binding site is contributed by G133. The 146-residue stretch at 182–327 (NFREETETDL…GQLRDMMPWI (146 aa)) folds into the KARI C-terminal knotted domain. Positions 190, 194, 226, and 230 each coordinate Mg(2+). Substrate is bound at residue S251.

Belongs to the ketol-acid reductoisomerase family. Mg(2+) serves as cofactor.

It catalyses the reaction (2R)-2,3-dihydroxy-3-methylbutanoate + NADP(+) = (2S)-2-acetolactate + NADPH + H(+). It carries out the reaction (2R,3R)-2,3-dihydroxy-3-methylpentanoate + NADP(+) = (S)-2-ethyl-2-hydroxy-3-oxobutanoate + NADPH + H(+). The protein operates within amino-acid biosynthesis; L-isoleucine biosynthesis; L-isoleucine from 2-oxobutanoate: step 2/4. Its pathway is amino-acid biosynthesis; L-valine biosynthesis; L-valine from pyruvate: step 2/4. Functionally, involved in the biosynthesis of branched-chain amino acids (BCAA). Catalyzes an alkyl-migration followed by a ketol-acid reduction of (S)-2-acetolactate (S2AL) to yield (R)-2,3-dihydroxy-isovalerate. In the isomerase reaction, S2AL is rearranged via a Mg-dependent methyl migration to produce 3-hydroxy-3-methyl-2-ketobutyrate (HMKB). In the reductase reaction, this 2-ketoacid undergoes a metal-dependent reduction by NADPH to yield (R)-2,3-dihydroxy-isovalerate. The polypeptide is Ketol-acid reductoisomerase (NADP(+)) (Dechloromonas aromatica (strain RCB)).